We begin with the raw amino-acid sequence, 438 residues long: Glutamyl-tRNA(Gln) amidotransferase subunit D (438 aa).

The 331-residue stretch at 92-422 (PEVTIIGTGG…EEVRKMMLTN (331 aa)) folds into the Asparaginase/glutaminase domain. Active-site residues include Thr102, Thr178, Asp179, and Lys256.

It belongs to the asparaginase 1 family. GatD subfamily. In terms of assembly, heterodimer of GatD and GatE.

It catalyses the reaction L-glutamyl-tRNA(Gln) + L-glutamine + ATP + H2O = L-glutaminyl-tRNA(Gln) + L-glutamate + ADP + phosphate + H(+). Allows the formation of correctly charged Gln-tRNA(Gln) through the transamidation of misacylated Glu-tRNA(Gln) in organisms which lack glutaminyl-tRNA synthetase. The reaction takes place in the presence of glutamine and ATP through an activated gamma-phospho-Glu-tRNA(Gln). The GatDE system is specific for glutamate and does not act on aspartate. This Pyrococcus abyssi (strain GE5 / Orsay) protein is Glutamyl-tRNA(Gln) amidotransferase subunit D.